We begin with the raw amino-acid sequence, 647 residues long: Microtubule-associated protein 9 (647 aa).

At serine 2 the chain carries N-acetylserine. Phosphotyrosine is present on tyrosine 12. Disordered regions lie at residues 127–323 (KSFS…ELIM), 344–421 (SATA…PDRA), 491–514 (KRLE…EALQ), 530–553 (KNRK…AEKK), 580–600 (NEKR…KQAI), and 613–647 (QERI…AKVF). Basic and acidic residues predominate over residues 133–145 (QNKDEEFEKDKIK). Polar residues predominate over residues 155–166 (IKSTSSAENNSL). Residues 174 to 186 (PSPRPRSMLKKKS) are compositionally biased toward basic residues. Residues 184–210 (KKSHMEEKDGLEDKETALSEELELHSA) are a coiled coil. Residues 187-200 (HMEEKDGLEDKETA) show a composition bias toward basic and acidic residues. Polar residues-rich tracts occupy residues 210-219 (APSSLPTPNG) and 239-249 (CLTSLASSSLK). Residues 268–287 (DPNEEITENHNSLKSDENKE) show a composition bias toward basic and acidic residues. A coiled-coil region spans residues 298–328 (AVEKSKESQVTADDLEEEKAKAELIMDDDRT). Residues 365–374 (NNRASSASAR) are compositionally biased toward low complexity. Residues 443–628 (MHRIKRIESE…KQKKRHSFLE (186 aa)) adopt a coiled-coil conformation.

As to quaternary structure, binds to purified microtubules via its C-terminus.

Its subcellular location is the cytoplasm. It localises to the cytoskeleton. It is found in the spindle. Involved in organization of the bipolar mitotic spindle. Required for bipolar spindle assembly, mitosis progression and cytokinesis. May act by stabilizing interphase microtubules. The chain is Microtubule-associated protein 9 (MAP9) from Homo sapiens (Human).